We begin with the raw amino-acid sequence, 333 residues long: UPF0284 protein VNG_1572C (333 aa).

It belongs to the UPF0284 family.

This chain is UPF0284 protein VNG_1572C, found in Halobacterium salinarum (strain ATCC 700922 / JCM 11081 / NRC-1) (Halobacterium halobium).